We begin with the raw amino-acid sequence, 284 residues long: Phosphatidylserine decarboxylase proenzyme (284 aa).

Residues aspartate 88, histidine 145, and serine 248 each act as charge relay system; for autoendoproteolytic cleavage activity in the active site. Serine 248 functions as the Schiff-base intermediate with substrate; via pyruvic acid; for decarboxylase activity in the catalytic mechanism. A Pyruvic acid (Ser); by autocatalysis modification is found at serine 248.

It belongs to the phosphatidylserine decarboxylase family. PSD-B subfamily. Prokaryotic type I sub-subfamily. Heterodimer of a large membrane-associated beta subunit and a small pyruvoyl-containing alpha subunit. The cofactor is pyruvate. Post-translationally, is synthesized initially as an inactive proenzyme. Formation of the active enzyme involves a self-maturation process in which the active site pyruvoyl group is generated from an internal serine residue via an autocatalytic post-translational modification. Two non-identical subunits are generated from the proenzyme in this reaction, and the pyruvate is formed at the N-terminus of the alpha chain, which is derived from the carboxyl end of the proenzyme. The autoendoproteolytic cleavage occurs by a canonical serine protease mechanism, in which the side chain hydroxyl group of the serine supplies its oxygen atom to form the C-terminus of the beta chain, while the remainder of the serine residue undergoes an oxidative deamination to produce ammonia and the pyruvoyl prosthetic group on the alpha chain. During this reaction, the Ser that is part of the protease active site of the proenzyme becomes the pyruvoyl prosthetic group, which constitutes an essential element of the active site of the mature decarboxylase.

It is found in the cell membrane. The enzyme catalyses a 1,2-diacyl-sn-glycero-3-phospho-L-serine + H(+) = a 1,2-diacyl-sn-glycero-3-phosphoethanolamine + CO2. The protein operates within phospholipid metabolism; phosphatidylethanolamine biosynthesis; phosphatidylethanolamine from CDP-diacylglycerol: step 2/2. In terms of biological role, catalyzes the formation of phosphatidylethanolamine (PtdEtn) from phosphatidylserine (PtdSer). The protein is Phosphatidylserine decarboxylase proenzyme of Delftia acidovorans (strain DSM 14801 / SPH-1).